The following is a 96-amino-acid chain: Beta-defensin 20 (96 aa).

Residues 1–21 form the signal peptide; it reads MKLLQVLLVLLFVALADGAQP. Disulfide bonds link Cys-24-Cys-52, Cys-32-Cys-46, and Cys-36-Cys-53.

Belongs to the beta-defensin family.

It is found in the secreted. Has antibacterial activity. This chain is Beta-defensin 20 (Defb20), found in Mus musculus (Mouse).